The following is a 103-amino-acid chain: MSNSCSTSSYPIRRKTPTRSGSNVNRNYVPSTYRPSICQCNQSNQSNQYNRSCHQTLPWYNKSNKPSFLDYKVNGSHSARKTCPSIPAKYHSPYTQCSGKCCC.

Composition is skewed to polar residues over residues 1 to 10 and 18 to 28; these read MSNSCSTSSY and TRSGSNVNRNY. The tract at residues 1–28 is disordered; it reads MSNSCSTSSYPIRRKTPTRSGSNVNRNY.

This is an uncharacterized protein from Acanthamoeba polyphaga mimivirus (APMV).